Consider the following 492-residue polypeptide: Phosphatidylglycerol--prolipoprotein diacylglyceryl transferase (492 aa).

9 consecutive transmembrane segments (helical) span residues isoleucine 40–tryptophan 60, alanine 72–proline 92, valine 106–alanine 126, alanine 133–leucine 153, glutamine 184–leucine 204, isoleucine 214–leucine 234, valine 361–isoleucine 381, glycine 409–isoleucine 429, and leucine 441–isoleucine 461. Arginine 230 is an a 1,2-diacyl-sn-glycero-3-phospho-(1'-sn-glycerol) binding site.

It belongs to the Lgt family.

It localises to the cell inner membrane. The enzyme catalyses L-cysteinyl-[prolipoprotein] + a 1,2-diacyl-sn-glycero-3-phospho-(1'-sn-glycerol) = an S-1,2-diacyl-sn-glyceryl-L-cysteinyl-[prolipoprotein] + sn-glycerol 1-phosphate + H(+). It functions in the pathway protein modification; lipoprotein biosynthesis (diacylglyceryl transfer). Functionally, catalyzes the transfer of the diacylglyceryl group from phosphatidylglycerol to the sulfhydryl group of the N-terminal cysteine of a prolipoprotein, the first step in the formation of mature lipoproteins. In Rhodopirellula baltica (strain DSM 10527 / NCIMB 13988 / SH1), this protein is Phosphatidylglycerol--prolipoprotein diacylglyceryl transferase.